Consider the following 157-residue polypeptide: MFDVLMYLFETYIHNEVEMRVDQDKLTDDLTQAGFHQDDIYNALNWLEKLADLQDGTGRAFALNADPLAMRIYTDEESQFLDTDCRGFLLFLEQIQVLNLETREMVIDRVMALDAAEFDLEDLKWVILMVLFNIPGCENAYQQMEDLVFEEDEQHLH.

This sequence belongs to the Smg family.

The polypeptide is Protein Smg (Sodalis glossinidius (strain morsitans)).